The primary structure comprises 582 residues: Pescadillo homolog (582 aa).

A coiled-coil region spans residues 277-329 (LSALSASLARVVATVEEEENQLDNFPTEEEDQENMQAREKEQKEQEAQKRLFE). A compositionally biased stretch (acidic residues) spans 294–309 (EENQLDNFPTEEEDQE). Positions 294-317 (EENQLDNFPTEEEDQENMQAREKE) are disordered. Residues 323–416 (AQKRLFEGLK…MRLPVEDYFL (94 aa)) enclose the BRCT domain. Basic and acidic residues predominate over residues 445–454 (ALQRGEKPVQ). Disordered stretches follow at residues 445-511 (ALQR…ETGS) and 554-582 (REVNKLTAKRKAHEDASKAQKKQKKAKKQ). The segment covering 455-477 (EEDEEEEDEDEEEDDDVDDEEFT) has biased composition (acidic residues). Over residues 478 to 490 (EEKNLKKMEDTRA) the composition is skewed to basic and acidic residues. Residues 517-582 (RLEQEEKAEE…QKKQKKAKKQ (66 aa)) adopt a coiled-coil conformation. Residues 572 to 582 (AQKKQKKAKKQ) show a composition bias toward basic residues.

This sequence belongs to the pescadillo family. In terms of assembly, component of the PeBoW complex, composed of bop1, pes1 and wdr12. The complex is held together by bop1, which interacts with pes1 via its N-terminal domain and with wdr12 via a high-affinity interaction between the seven-bladed beta-propeller domains of the 2 proteins. The PeBoW complex associates with the 66S pre-ribosome.

It localises to the nucleus. The protein resides in the nucleolus. Its subcellular location is the nucleoplasm. Functionally, component of the PeBoW complex, which is required for maturation of 28S and 5.8S ribosomal RNAs and formation of the 60S ribosome. This is Pescadillo homolog (pes1) from Salmo salar (Atlantic salmon).